We begin with the raw amino-acid sequence, 1543 residues long: Tubby-related protein 4 (1543 aa).

WD repeat units follow at residues 6-72, 73-115, 116-158, 159-237, 238-276, 277-334, and 335-372; these read EHGP…STPQ, RINF…YEGR, WSVE…SGQR, HWSS…SDDY, APPQ…YDDL, SPTV…GEHI, and FTLD…RVEH. The region spanning 364-414 is the SOCS box domain; sequence ALYVVRVEHRVSSLQLLCQQAIASTLREDKDVSKLTLPPRLCSYLSTAFIP. Disordered stretches follow at residues 530–577 and 829–850; these read SPKI…SVGS and TKIN…TAAP. At Ser577 the chain carries Phosphoserine. Asymmetric dimethylarginine is present on residues Arg945 and Arg950. 3 disordered regions span residues 1004 to 1058, 1326 to 1355, and 1367 to 1453; these read SPRA…HTAS, VPQR…AITE, and DFNS…ASEK. Over residues 1036–1050 the composition is skewed to polar residues; that stretch reads TCSQCSGTGPSSQPG. The segment covering 1329-1347 has biased composition (basic and acidic residues); sequence RTEKFGKKNRKRLDSRAEE. Ser1343 and Ser1374 each carry phosphoserine. Basic and acidic residues predominate over residues 1443-1453; it reads EEAKCRRASEK. The tract at residues 1466-1543 is TUB; sequence VMANKQPLWN…ALANVTQRLK (78 aa).

The protein belongs to the TUB family. As to expression, expressed mainly in the brain, skeletal muscle, testis and kidney.

It localises to the cytoplasm. It participates in protein modification; protein ubiquitination. In terms of biological role, may be a substrate-recognition component of a SCF-like ECS (Elongin-Cullin-SOCS-box protein) E3 ubiquitin ligase complex which mediates the ubiquitination and subsequent proteasomal degradation of target proteins. The polypeptide is Tubby-related protein 4 (TULP4) (Homo sapiens (Human)).